The chain runs to 200 residues: HTH-type transcriptional regulator BetI (200 aa).

The HTH tetR-type domain occupies 8–68; the sequence is SIRKQQLIQA…AAMRHIQYQL (61 aa). Positions 31–50 form a DNA-binding region, H-T-H motif; the sequence is SIALIARKAGVSNGIISHYF.

It participates in amine and polyamine biosynthesis; betaine biosynthesis via choline pathway [regulation]. In terms of biological role, repressor involved in the biosynthesis of the osmoprotectant glycine betaine. It represses transcription of the choline transporter BetT and the genes of BetAB involved in the synthesis of glycine betaine. This Proteus mirabilis (strain HI4320) protein is HTH-type transcriptional regulator BetI.